A 470-amino-acid polypeptide reads, in one-letter code: Glucose-1-phosphate adenylyltransferase (470 aa).

Residues Gly-164, 181–182 (EK), and Ser-199 contribute to the alpha-D-glucose 1-phosphate site.

This sequence belongs to the bacterial/plant glucose-1-phosphate adenylyltransferase family. Homotetramer.

It carries out the reaction alpha-D-glucose 1-phosphate + ATP + H(+) = ADP-alpha-D-glucose + diphosphate. It participates in glycan biosynthesis; glycogen biosynthesis. Involved in the biosynthesis of ADP-glucose, a building block required for the elongation reactions to produce glycogen. Catalyzes the reaction between ATP and alpha-D-glucose 1-phosphate (G1P) to produce pyrophosphate and ADP-Glc. The protein is Glucose-1-phosphate adenylyltransferase of Pseudarthrobacter chlorophenolicus (strain ATCC 700700 / DSM 12829 / CIP 107037 / JCM 12360 / KCTC 9906 / NCIMB 13794 / A6) (Arthrobacter chlorophenolicus).